The primary structure comprises 317 residues: D-aminoacyl-tRNA deacylase (317 aa).

Belongs to the DtdA deacylase family. It depends on Zn(2+) as a cofactor. In terms of tissue distribution, ubiquitous.

It localises to the nucleus. It is found in the cytoplasm. The catalysed reaction is a D-aminoacyl-tRNA + H2O = a tRNA + a D-alpha-amino acid + H(+). It catalyses the reaction glycyl-tRNA(Ala) + H2O = tRNA(Ala) + glycine + H(+). In terms of biological role, hydrolyzes D-aminoacyl-tRNA into D-amino acid and free tRNA. Broad specificity toward the amino acid, but strict specificity toward the D-isomer. Seems to be required for ethanol tolerance. The sequence is that of D-aminoacyl-tRNA deacylase (GEK1) from Arabidopsis thaliana (Mouse-ear cress).